We begin with the raw amino-acid sequence, 346 residues long: Histone PARylation factor 1 (346 aa).

N-acetylmethionine is present on Met1. The segment at 1 to 23 is disordered; that stretch reads MVGGGGKRRPGGEGPQCEKTTDV. At Lys19 the chain carries N6-acetyllysine. At Ser97 the chain carries ADP-ribosylserine. N6-acetyllysine is present on residues Lys186 and Lys233. Residue Asp235 is modified to PolyADP-ribosyl aspartic acid. Tyr238 bears the ADP-ribosyltyrosine mark. Position 240 is a polyADP-ribosyl glutamic acid (Glu240). An interaction with PARP1 region spans residues 242 to 346; it reads PETDADLKRI…SQENIDQLAA (105 aa). The Proton donor role is filled by Glu284.

This sequence belongs to the HPF1 family. In terms of assembly, interacts with PARP1 (via the PARP catalytic domain). Interacts with PARP2 (via the PARP catalytic domain). Interacts with core nucleosomes in a PARP1- and PARP2-dependent manner.

Its subcellular location is the chromosome. It localises to the nucleus. Functionally, cofactor for serine ADP-ribosylation that confers serine specificity on PARP1 and PARP2 and plays a key role in DNA damage response. Initiates the repair of double-strand DNA breaks: recruited to DNA damage sites by PARP1 and PARP2 and switches the amino acid specificity of PARP1 and PARP2 from aspartate or glutamate to serine residues, licensing serine ADP-ribosylation of target proteins. Serine ADP-ribosylation of target proteins, such as histones, promotes decompaction of chromatin and the recruitment of repair factors leading to the reparation of DNA strand breaks. Serine ADP-ribosylation of proteins constitutes the primary form of ADP-ribosylation of proteins in response to DNA damage. HPF1 acts by completing the active site of PARP1 and PARP2: forms a composite active site composed of residues from HPF1 and PARP1 or PARP2. While HPF1 promotes the initiation of serine ADP-ribosylation, it restricts the polymerase activity of PARP1 and PARP2 in order to limit the length of poly-ADP-ribose chains. HPF1 also promotes tyrosine ADP-ribosylation, probably by conferring tyrosine specificity on PARP1. The protein is Histone PARylation factor 1 of Homo sapiens (Human).